The primary structure comprises 284 residues: Tropomyosin (284 aa).

Residues 1 to 273 (MDAIKKKMVA…KEKYKAISDE (273 aa)) adopt a coiled-coil conformation. Basic and acidic residues predominate over residues 110–130 (SGKLEEASKAADESERNRKVL). Residues 110-134 (SGKLEEASKAADESERNRKVLENLN) form a disordered region.

It belongs to the tropomyosin family. In terms of assembly, homodimer.

Its function is as follows. Tropomyosin, in association with the troponin complex, plays a central role in the calcium dependent regulation of muscle contraction. The sequence is that of Tropomyosin from Perna viridis (Asian green mussel).